Reading from the N-terminus, the 334-residue chain is Isocitrate/homoisocitrate dehydrogenase (334 aa).

An NADH-binding site is contributed by 70–72 (ATS). (2R,3S)-homoisocitrate is bound by residues Ser-72, Arg-85, Arg-88, Arg-98, Arg-118, Tyr-125, Lys-171, and Asn-173. Asn-173 provides a ligand contact to NADH. The Mg(2+) site is built by Asp-204, Asp-228, and Asp-232. NADH contacts are provided by residues 261–265 (GSAPD) and Asn-273.

Belongs to the isocitrate and isopropylmalate dehydrogenases family. Homotetramer. Dimer of dimers. The homotetramer can transiently dissociate into homodimers. Requires Mg(2+) as cofactor.

It carries out the reaction (2R,3S)-homoisocitrate + NAD(+) = 2-oxoadipate + CO2 + NADH. It catalyses the reaction D-threo-isocitrate + NAD(+) = 2-oxoglutarate + CO2 + NADH. It participates in amino-acid biosynthesis; L-lysine biosynthesis via AAA pathway; L-alpha-aminoadipate from 2-oxoglutarate: step 4/5. Its function is as follows. Catalyzes the NAD(+)-dependent oxidative decarboxylation of homoisocitrate to 2-oxoadipate (alpha-ketoadipate), a reaction involved in lysine biosynthesis through the alpha-aminoadipate pathway. In addition, has high activity with isocitrate, but is inactive with 3-isopropylmalate. The polypeptide is Isocitrate/homoisocitrate dehydrogenase (hicd) (Thermus thermophilus (strain ATCC BAA-163 / DSM 7039 / HB27)).